Reading from the N-terminus, the 395-residue chain is Succinyl-diaminopimelate desuccinylase (395 aa).

Position 74 (His-74) interacts with Zn(2+). The active site involves Asp-76. Asp-107 serves as a coordination point for Zn(2+). Glu-141 serves as the catalytic Proton acceptor. Zn(2+) is bound by residues Glu-142, Glu-170, and His-368.

It belongs to the peptidase M20A family. DapE subfamily. Homodimer. Zn(2+) is required as a cofactor. It depends on Co(2+) as a cofactor.

The catalysed reaction is N-succinyl-(2S,6S)-2,6-diaminopimelate + H2O = (2S,6S)-2,6-diaminopimelate + succinate. It functions in the pathway amino-acid biosynthesis; L-lysine biosynthesis via DAP pathway; LL-2,6-diaminopimelate from (S)-tetrahydrodipicolinate (succinylase route): step 3/3. In terms of biological role, catalyzes the hydrolysis of N-succinyl-L,L-diaminopimelic acid (SDAP), forming succinate and LL-2,6-diaminopimelate (DAP), an intermediate involved in the bacterial biosynthesis of lysine and meso-diaminopimelic acid, an essential component of bacterial cell walls. In Brucella melitensis biotype 1 (strain ATCC 23456 / CCUG 17765 / NCTC 10094 / 16M), this protein is Succinyl-diaminopimelate desuccinylase.